The sequence spans 82 residues: Small ribosomal subunit protein bS16 (82 aa).

Belongs to the bacterial ribosomal protein bS16 family.

The protein is Small ribosomal subunit protein bS16 of Yersinia enterocolitica serotype O:8 / biotype 1B (strain NCTC 13174 / 8081).